A 379-amino-acid chain; its full sequence is Actin, cytoplasmic (379 aa).

This sequence belongs to the actin family.

The protein resides in the cytoplasm. It localises to the cytoskeleton. The catalysed reaction is ATP + H2O = ADP + phosphate + H(+). Actins are highly conserved proteins that are involved in various types of cell motility and are ubiquitously expressed in all eukaryotic cells. The sequence is that of Actin, cytoplasmic from Euplotes crassus.